The sequence spans 254 residues: Putative epimerase LsrE (254 aa).

The chain crosses the membrane as a helical span at residues 14–34 (VALLASYPLSVGILAGQWIAL). The a divalent metal cation site is built by H50, D52, and H81. Catalysis depends on D52, which acts as the Proton acceptor. Residues H81, 166-169 (GYGS), 199-201 (DGS), and 221-222 (GS) each bind substrate. Residue D199 coordinates a divalent metal cation. D199 acts as the Proton donor in catalysis.

This sequence belongs to the ribulose-phosphate 3-epimerase family. A divalent metal cation serves as cofactor.

The protein resides in the cell membrane. This Salmonella paratyphi A (strain ATCC 9150 / SARB42) protein is Putative epimerase LsrE (lsrE).